A 281-amino-acid chain; its full sequence is NAD-dependent protein deacetylase 3 (281 aa).

A Deacetylase sirtuin-type domain is found at 1 to 281 (MLDSPTLDLL…PWLAEQLITR (281 aa)). Residues 27-47 (GAGI…GVRR) and 105-108 (QNVD) contribute to the NAD(+) site. His123 (proton acceptor) is an active-site residue. Zn(2+) contacts are provided by Cys131, Cys134, Cys182, and Cys185. NAD(+) contacts are provided by residues 223 to 225 (GTS), 249 to 251 (NHG), and Cys267.

The protein belongs to the sirtuin family. Class II subfamily. It depends on Zn(2+) as a cofactor.

The protein localises to the cytoplasm. The catalysed reaction is N(6)-acetyl-L-lysyl-[protein] + NAD(+) + H2O = 2''-O-acetyl-ADP-D-ribose + nicotinamide + L-lysyl-[protein]. NAD-dependent protein deacetylase which modulates the activities of several enzymes which are inactive in their acetylated form. This chain is NAD-dependent protein deacetylase 3, found in Pseudomonas syringae pv. tomato (strain ATCC BAA-871 / DC3000).